A 440-amino-acid polypeptide reads, in one-letter code: MLTRFAPSPTGYLHVGNARTALVCWMYTRSQNGKFLLRFDDTDLQRSDVKHIDSIVQDLRWICIDWDVIFKQSERFKHYNEVFLQLITKGHIYACYETKEELDIKRKLQLKHGLPPVYDRSALLLTEQEKFCYEQEGRKPHFRFKLDRNEVVKWNDEVKGEINIATSSISDPVVKREDGIYTYMLPSVIDDVDFNVTHVIRGEDHVTNTAVQIQMIQALEAKVPVFAHLPLLHFDDSKISKRKGGLDIKSIKENEIEPMALASYLIKLGTSDPIEAYVNMQSLIDSFDIKKFGSASAQFNLSEIHKLNSKVLQQMPFEMVKERLSQIGVNSPEFWYFIRNNIEKFSEVAEWWQICKSNIEPVVLDKEFIKIVLDALPQGDCNENTLSEWVKAIQQTVDIKLKDLFMQLRLALTGAKTGPELAKLLIFIGKENIIARLKKY.

The 'HIGH' region motif lies at 7–17 (PSPTGYLHVGN). Residues 238 to 242 (KISKR) carry the 'KMSKS' region motif. An ATP-binding site is contributed by Lys-241.

It belongs to the class-I aminoacyl-tRNA synthetase family. Glutamate--tRNA ligase type 1 subfamily. In terms of assembly, monomer.

The protein localises to the cytoplasm. The catalysed reaction is tRNA(Glu) + L-glutamate + ATP = L-glutamyl-tRNA(Glu) + AMP + diphosphate. Its function is as follows. Catalyzes the attachment of glutamate to tRNA(Glu) in a two-step reaction: glutamate is first activated by ATP to form Glu-AMP and then transferred to the acceptor end of tRNA(Glu). The chain is Glutamate--tRNA ligase 1 from Wolbachia sp. subsp. Brugia malayi (strain TRS).